The primary structure comprises 303 residues: Coenzyme PQQ synthesis protein B (303 aa).

The protein belongs to the PqqB family.

The protein operates within cofactor biosynthesis; pyrroloquinoline quinone biosynthesis. May be involved in the transport of PQQ or its precursor to the periplasm. This is Coenzyme PQQ synthesis protein B from Acinetobacter baumannii (strain ACICU).